Reading from the N-terminus, the 360-residue chain is Arginase, non-hepatic 2 (360 aa).

4 residues coordinate Mn(2+): histidine 122, aspartate 145, histidine 147, and aspartate 149. Residues 147–151 (HADIN), 158–160 (SGN), and aspartate 204 each bind substrate. Mn(2+) contacts are provided by aspartate 253 and aspartate 255. Substrate contacts are provided by threonine 267 and glutamate 298.

The protein belongs to the arginase family. In terms of assembly, homotrimer. The cofactor is Mn(2+). Expressed at differing tadpole stages in tail, intestine, hindlimb and trunk region. Strongest in tadpole tail.

It carries out the reaction L-arginine + H2O = urea + L-ornithine. It participates in nitrogen metabolism; urea cycle; L-ornithine and urea from L-arginine: step 1/1. Its function is as follows. As well as its role in the urea cycle, may be involved in tissue remodeling. The protein is Arginase, non-hepatic 2 (arg2-b) of Xenopus laevis (African clawed frog).